The primary structure comprises 712 residues: Envelope glycoprotein gp160 (712 aa).

Positions 1-24 (MCGRNQLFVASLLASACLIYCVQY) are cleaved as a signal peptide. Over 25-673 (VTVFYGVPVW…LTSWIKYIQY (649 aa)) the chain is Extracellular. N-linked (GlcNAc...) asparagine; by host glycosylation occurs at Asn36. Cys43 and Cys56 are oxidised to a cystine. Residues Asn69, Asn78, Asn113, Asn119, Asn131, Asn137, Asn145, Asn160, Asn173, Asn200, Asn232, Asn235, Asn242, Asn266, Asn272, Asn283, Asn294, Asn304, Asn359, Asn392, Asn402, Asn405, Asn442, Asn457, and Asn460 are each glycosylated (N-linked (GlcNAc...) asparagine; by host). 5 disulfide bridges follow: Cys100–Cys208, Cys107–Cys199, Cys112–Cys157, Cys221–Cys251, and Cys231–Cys243. The V1 stretch occupies residues 112-156 (CNSTTAKNTTSTPTTTTTANTTIGENSSCIRTDNCTGLGEEEMVD). Residues 157–199 (CQFNMTGLERDKKKLYNETWYSKDVVCESKDTKKEKTCYMNHC) form a V2 region. The tract at residues 299–331 (CKRPGNKTVVPITLMSGLVFHSQPINRRPRQAW) is V3. A disulfide bridge connects residues Cys299 and Cys332. Intrachain disulfides connect Cys384-Cys441 and Cys391-Cys414. A V4 region spans residues 391 to 414 (CNMTWFLNWVENRTNQTQHNYVPC). The interval 457–463 (NQTNITF) is V5. The interval 506–526 (GVFVLGFLGFLTTAGAAMGAA) is fusion peptide. The segment at 569–585 (LQARVTAIEKYLKDQAQ) is immunosuppression. 3 N-linked (GlcNAc...) asparagine; by host glycosylation sites follow: Asn605, Asn614, and Asn630. A coiled-coil region spans residues 614-646 (NITWQEWEQRIRNLEANISESLEQAQIQQEKNM). Positions 651–672 (KLNSWDVFSNWFDLTSWIKYIQ) are MPER; binding to GalCer. Residues 674 to 694 (GVYIVVGIIVLRMVIYVVQML) form a helical membrane-spanning segment. At 695–712 (SRLRKGYRPVFSSPPAYS) the chain is on the cytoplasmic side. Positions 701–704 (YRPV) match the YXXV motif; contains endocytosis signal motif.

In terms of assembly, the mature envelope protein (Env) consists of a homotrimer of non-covalently associated gp120-gp41 heterodimers. The resulting complex protrudes from the virus surface as a spike. There seems to be as few as 10 spikes on the average virion. Interacts with human CD4, CCR5 and CXCR4, to form a P4HB/PDI-CD4-CXCR4-gp120 complex. Gp120 also interacts with the C-type lectins CD209/DC-SIGN and CLEC4M/DC-SIGNR (collectively referred to as DC-SIGN(R)). Gp120 and gp41 interact with GalCer. The mature envelope protein (Env) consists of a homotrimer of non-covalently associated gp120-gp41 heterodimers. The resulting complex protrudes from the virus surface as a spike. There seems to be as few as 10 spikes on the average virion. In terms of processing, specific enzymatic cleavages in vivo yield mature proteins. Envelope glycoproteins are synthesized as an inactive precursor that is heavily N-glycosylated and processed likely by host cell furin in the Golgi to yield the mature SU and TM proteins. The cleavage site between SU and TM requires the minimal sequence [KR]-X-[KR]-R.

Its subcellular location is the virion membrane. It is found in the host cell membrane. The protein resides in the host endosome membrane. Its function is as follows. The surface protein gp120 (SU) attaches the virus to the host lymphoid cell by binding to the primary receptor CD4. This interaction induces a structural rearrangement creating a high affinity binding site for a chemokine coreceptor like CXCR4 and/or CCR5. This peculiar 2 stage receptor-interaction strategy allows gp120 to maintain the highly conserved coreceptor-binding site in a cryptic conformation, protected from neutralizing antibodies. Since CD4 also displays a binding site for the disulfide-isomerase P4HB/PDI, a P4HB/PDI-CD4-CXCR4-gp120 complex may form. In that complex, P4HB/PDI could reach and reduce gp120 disulfide bonds, causing major conformational changes in gp120. TXN, another PDI family member could also be involved in disulfide rearrangements in Env during fusion. These changes are transmitted to the transmembrane protein gp41 and are thought to activate its fusogenic potential by unmasking its fusion peptide. Functionally, the surface protein gp120 is a ligand for CD209/DC-SIGN and CLEC4M/DC-SIGNR, which are respectively found on dendritic cells (DCs), and on endothelial cells of liver sinusoids and lymph node sinuses. These interactions allow capture of viral particles at mucosal surfaces by these cells and subsequent transmission to permissive cells. DCs are professional antigen presenting cells, critical for host immunity by inducing specific immune responses against a broad variety of pathogens. They act as sentinels in various tissues where they take up antigen, process it, and present it to T-cells following migration to lymphoid organs. HIV subverts the migration properties of dendritic cells to gain access to CD4+ T-cells in lymph nodes. Virus transmission to permissive T-cells occurs either in trans (without DCs infection, through viral capture and transmission), or in cis (following DCs productive infection, through the usual CD4-gp120 interaction), thereby inducing a robust infection. In trans infection, bound virions remain infectious over days and it is proposed that they are not degraded, but protected in non-lysosomal acidic organelles within the DCs close to the cell membrane thus contributing to the viral infectious potential during DCs' migration from the periphery to the lymphoid tissues. On arrival at lymphoid tissues, intact virions recycle back to DCs' cell surface allowing virus transmission to CD4+ T-cells. Virion capture also seems to lead to MHC-II-restricted viral antigen presentation, and probably to the activation of HIV-specific CD4+ cells. The transmembrane protein gp41 (TM) acts as a class I viral fusion protein. Under the current model, the protein has at least 3 conformational states: pre-fusion native state, pre-hairpin intermediate state, and post-fusion hairpin state. During fusion of viral and target intracellular membranes, the coiled coil regions (heptad repeats) assume a trimer-of-hairpins structure, positioning the fusion peptide in close proximity to the C-terminal region of the ectodomain. The formation of this structure appears to drive apposition and subsequent fusion of viral and target cell membranes. Complete fusion occurs in host cell endosomes and is dynamin-dependent, however some lipid transfer might occur at the plasma membrane. The virus undergoes clathrin-dependent internalization long before endosomal fusion, thus minimizing the surface exposure of conserved viral epitopes during fusion and reducing the efficacy of inhibitors targeting these epitopes. Membranes fusion leads to delivery of the nucleocapsid into the cytoplasm. In terms of biological role, the envelope glycoprotein gp160 precursor down-modulates cell surface CD4 antigen by interacting with it in the endoplasmic reticulum and blocking its transport to the cell surface. Its function is as follows. The gp120-gp41 heterodimer seems to contribute to T-cell depletion during HIV-1 infection. The envelope glycoproteins expressed on the surface of infected cells induce apoptosis through an interaction with uninfected cells expressing the receptor (CD4) and the coreceptors CXCR4 or CCR5. This type of bystander killing may be obtained by at least three distinct mechanisms. First, the interaction between the 2 cells can induce cellular fusion followed by nuclear fusion within the syncytium. Syncytia are condemned to die from apoptosis. Second, the 2 interacting cells may not fuse entirely and simply exchange plasma membrane lipids, after a sort of hemifusion process, followed by rapid death. Third, it is possible that virus-infected cells, on the point of undergoing apoptosis, fuse with CD4-expressing cells, in which case apoptosis is rapidly transmitted from one cell to the other and thus occurs in a sort of contagious fashion. Functionally, the gp120-gp41 heterodimer allows rapid transcytosis of the virus through CD4 negative cells such as simple epithelial monolayers of the intestinal, rectal and endocervical epithelial barriers. Both gp120 and gp41 specifically recognize glycosphingolipids galactosyl-ceramide (GalCer) or 3' sulfo-galactosyl-ceramide (GalS) present in the lipid rafts structures of epithelial cells. Binding to these alternative receptors allows the rapid transcytosis of the virus through the epithelial cells. This transcytotic vesicle-mediated transport of virions from the apical side to the basolateral side of the epithelial cells does not involve infection of the cells themselves. This chain is Envelope glycoprotein gp160 (env), found in Homo sapiens (Human).